The following is a 287-amino-acid chain: Large ribosomal subunit protein uL2 (287 aa).

Residues 221 to 287 (RGSVMNPCDH…SKRSRGGRDS (67 aa)) form a disordered region. Basic residues predominate over residues 258–287 (KTRKKNKPSNKLVVRRRRRISKRSRGGRDS).

This sequence belongs to the universal ribosomal protein uL2 family. In terms of assembly, part of the 50S ribosomal subunit. Forms a bridge to the 30S subunit in the 70S ribosome.

Functionally, one of the primary rRNA binding proteins. Required for association of the 30S and 50S subunits to form the 70S ribosome, for tRNA binding and peptide bond formation. It has been suggested to have peptidyltransferase activity; this is somewhat controversial. Makes several contacts with the 16S rRNA in the 70S ribosome. This is Large ribosomal subunit protein uL2 from Prochlorococcus marinus (strain MIT 9215).